Here is a 244-residue protein sequence, read N- to C-terminus: Osmotin-like protein OSM34 (244 aa).

Positions 1–22 are cleaved as a signal peptide; that stretch reads MANLLVSTFIFSALLLISTATA. 8 cysteine pairs are disulfide-bonded: cysteine 31–cysteine 222, cysteine 72–cysteine 82, cysteine 87–cysteine 93, cysteine 138–cysteine 212, cysteine 143–cysteine 195, cysteine 151–cysteine 161, cysteine 165–cysteine 174, and cysteine 175–cysteine 182.

Belongs to the thaumatin family.

This Arabidopsis thaliana (Mouse-ear cress) protein is Osmotin-like protein OSM34 (OSM34).